The following is an 802-amino-acid chain: Osmosensitive cation channel TMEM63C (802 aa).

Residues 1-35 are Extracellular-facing; that stretch reads MSAFPDSMDQKFHNMTVNECFQSRSTVLQGQPFGG. Residues 36 to 60 form a helical membrane-spanning segment; it reads IPTVLVLNIILWVFVVLLYSFLRKA. Residues 61 to 124 lie on the Cytoplasmic side of the membrane; sequence AWDYGRLALL…RDRDLINKCG (64 aa). Residues Ser75 and Ser78 each carry the phosphoserine modification. The chain crosses the membrane as a helical span at residues 125-157; sequence DDARIYITFQYHLIIFVLILCIPSLGIILPVNY. The Extracellular portion of the chain corresponds to 158–180; it reads IGTVLDWNSHFGRTTIVNVSTES. The chain crosses the membrane as a helical span at residues 181–205; that stretch reads KFLWLHSLFAFLYFLINLAFMGHHC. At 206-401 the chain is on the cytoplasmic side; the sequence is LGFVPKKSLH…IIWKHLSIRR (196 aa). The helical transmembrane segment at 402 to 431 threads the bilayer; the sequence is FSWWTRFIAINTFLFFLFFFLTTPAIIINT. Residues 432-446 are Extracellular-facing; it reads IDIYNVTRPIEKLQS. Residues 447-476 form a helical membrane-spanning segment; sequence PIVTQFFPSVLLWAFTVTMPLLVYLSAFLE. Residues 477–480 are Cytoplasmic-facing; the sequence is AHWT. Residues 481-517 traverse the membrane as a helical segment; it reads RSSQNLIIVHKCYIFLVFMVVILPSMGLTSLHVFLRW. At 518–540 the chain is on the extracellular side; sequence LFDIYYLEHATIRFQCVFLPDNG. A helical transmembrane segment spans residues 541–573; it reads AFFINYVITAALLGTGMELMRLGSLCTYCTRLF. Residues 574 to 593 lie on the Cytoplasmic side of the membrane; that stretch reads LSKSEPERVHIRKNQATDFQ. A helical membrane pass occupies residues 594 to 612; sequence FGREYAWMLNVFSVVMAYS. Residues 613–615 lie on the Extracellular side of the membrane; that stretch reads ITC. The chain crosses the membrane as a helical span at residues 616–640; the sequence is PIIVPFGLLYLCMKHITDRYNMYYS. Over 641–647 the chain is Cytoplasmic; that stretch reads YAPTKLN. The chain crosses the membrane as a helical span at residues 648–676; the sequence is AQIHMAAVYQAIFAPLLGLFWMLFFSILR. At 677–681 the chain is on the extracellular side; it reads VGSLH. A helical membrane pass occupies residues 682–702; it reads SITLFSMSSLIISVVIAFSGV. At 703 to 802 the chain is on the cytoplasmic side; it reads FLGKLRIAQR…EGLEMEGQSH (100 aa). The segment at 753-785 is disordered; it reads TPASSPARHTYGTINSQPEEGEEESGLRGFARE.

Belongs to the CSC1 (TC 1.A.17) family. In terms of assembly, monomer.

It is found in the endoplasmic reticulum membrane. It localises to the cell membrane. The catalysed reaction is Ca(2+)(in) = Ca(2+)(out). In terms of biological role, acts as an osmosensitive cation channel preferentially activated upon hypotonic stress. In contrast to TMEM63B, does not show phospholipid scramblase activity. Enriched in mitochondria-ER contact sites where it may regulate the metabolite flux and organelles' morphologies in response to osmotic changes. In particular may regulate mitochondrial motility and function in motor neuron axons. Required for the functional integrity of the kidney glomerular filtration barrier. The protein is Osmosensitive cation channel TMEM63C of Mus musculus (Mouse).